A 954-amino-acid polypeptide reads, in one-letter code: Kinesin-like protein KIN-14A (954 aa).

One can recognise a Calponin-homology (CH) domain in the interval 24–142; it reads ALRRHQAATW…CVISLKSYHE (119 aa). Residues 242 to 293 are a coiled coil; the sequence is LSRQLEKEQSSNSQVENRRRLLQAQESELLELKSMFQEVKIDFRTLKTQFQD. Residues 332–651 enclose the Kinesin motor domain; the sequence is NIRVFCRIRP…LKFAQRASCV (320 aa). 413–420 contacts ATP; that stretch reads GQTGSGKT. Residues 656–692 are a coiled coil; the sequence is AHANKESNEIRELKEQVENLKRALAAKELEKSSFKLK. Residues 697–709 are compositionally biased toward basic and acidic residues; it reads VRERAKQVPERTP. Disordered stretches follow at residues 697–743, 824–858, and 882–954; these read VRER…TKLN, NLEV…RKSI, and PAKI…KRWL. 2 stretches are compositionally biased toward polar residues: residues 831-849 and 886-898; these read DEPS…NATK and ANST…SSIT.

The protein belongs to the TRAFAC class myosin-kinesin ATPase superfamily. Kinesin family. KIN-14 subfamily.

This chain is Kinesin-like protein KIN-14A, found in Oryza sativa subsp. japonica (Rice).